The following is a 295-amino-acid chain: Deleted in azoospermia-like (295 aa).

Over residues 1–10 (MSTANPETPN) the composition is skewed to polar residues. The tract at residues 1–25 (MSTANPETPNSTISREASTQSSSAA) is disordered. Residues 11–25 (STISREASTQSSSAA) are compositionally biased toward low complexity. The region spanning 40 to 115 (NTVFVGGIDV…KKLKLGPAIR (76 aa)) is the RRM domain. The tract at residues 80-132 (KGYGFVSFFNDVDVQKIVESQINFHGKKLKLGPAIRKQNLCAYHVQPRPLVFN) is homodimerization. One can recognise a DAZ domain in the interval 167–190 (AYPTYPNSPVQVITGYQLPVYNYQ). The residue at position 276 (Tyr276) is a Phosphotyrosine.

The protein belongs to the RRM DAZ family. In terms of assembly, homodimer and heterodimer. Multiple DAZL RRMs can bind to a single RNA containing multiple GUU triplets. Forms a heterodimer with DAZ. Interacts with BOLL, DAZAP1 and DAZAP2. Interacts with PUM2. In terms of tissue distribution, testis specific.

It is found in the cytoplasm. The protein localises to the nucleus. In terms of biological role, RNA-binding protein, which is essential for gametogenesis in both males and females. Plays a central role during spermatogenesis. Acts by binding to the 3'-UTR of mRNA, specifically recognizing GUU triplets, and thereby regulating the translation of key transcripts. In Homo sapiens (Human), this protein is Deleted in azoospermia-like (DAZL).